Here is a 90-residue protein sequence, read N- to C-terminus: Small ribosomal subunit protein bS20 (90 aa).

The protein belongs to the bacterial ribosomal protein bS20 family.

In terms of biological role, binds directly to 16S ribosomal RNA. The sequence is that of Small ribosomal subunit protein bS20 from Rickettsia canadensis (strain McKiel).